The chain runs to 192 residues: uncharacterized protein (192 aa).

The 132-residue stretch at 29 to 160 (HRQAAVLIPI…PLDIYRRGDS (132 aa)) folds into the Nudix hydrolase domain. Residues 67-89 (GAVDDTDASAIAAALREAEEEVA) carry the Nudix box motif. Mg(2+) is bound by residues Glu-83 and Glu-87.

Belongs to the Nudix hydrolase family. PCD1 subfamily. Mn(2+) is required as a cofactor. It depends on Mg(2+) as a cofactor.

In terms of biological role, probably mediates the hydrolysis of some nucleoside diphosphate derivatives. This is an uncharacterized protein from Escherichia coli (strain K12).